Here is an 806-residue protein sequence, read N- to C-terminus: Leucine--tRNA ligase (806 aa).

The short motif at 38-48 (PYPSGEIHMGH) is the 'HIGH' region element. The short motif at 572-576 (KMSKS) is the 'KMSKS' region element. K575 contacts ATP.

It belongs to the class-I aminoacyl-tRNA synthetase family.

It localises to the cytoplasm. It catalyses the reaction tRNA(Leu) + L-leucine + ATP = L-leucyl-tRNA(Leu) + AMP + diphosphate. This is Leucine--tRNA ligase from Helicobacter pylori (strain J99 / ATCC 700824) (Campylobacter pylori J99).